The sequence spans 526 residues: Peptide chain release factor 3 (526 aa).

Positions 9–277 (DKRRTFAIIS…GIVEWAPRPQ (269 aa)) constitute a tr-type G domain. GTP contacts are provided by residues 18–25 (SHPDAGKT), 86–90 (DTPGH), and 140–143 (NKLD).

It belongs to the TRAFAC class translation factor GTPase superfamily. Classic translation factor GTPase family. PrfC subfamily.

Its subcellular location is the cytoplasm. Its function is as follows. Increases the formation of ribosomal termination complexes and stimulates activities of RF-1 and RF-2. It binds guanine nucleotides and has strong preference for UGA stop codons. It may interact directly with the ribosome. The stimulation of RF-1 and RF-2 is significantly reduced by GTP and GDP, but not by GMP. This is Peptide chain release factor 3 from Shewanella loihica (strain ATCC BAA-1088 / PV-4).